A 312-amino-acid chain; its full sequence is MDEANHSVVSEFVFLGLSDSRKIQLLLFLFFSVFYVSSLMGNLLIVLTVTSDPRLQSPMYFLLANLSIINLVFCSSTAPKMIYDLFRKHKTISFGGCVVQIFFIHAVGGTEMVLLIAMAFDRYVAICKPLHYLTIMNPQRCILFLVISWIIGIIHSVIQLAFVVDLLFCGPNELDSFFCDLPRFIKLACIETYTLGFMVTANSGFISLASFLILIISYIFILVTVQKKSSGGIFKAFSMLSAHVIVVVLVFGPLIFFYIFPFPTSHLDKFLAIFDAVITPVLNPVIYTFRNKEMMVAMRRRCSQFVNYSKIF.

Residues Met1 to Leu25 are Extracellular-facing. Asn5 carries an N-linked (GlcNAc...) asparagine glycan. The helical transmembrane segment at Leu26–Val49 threads the bilayer. Topologically, residues Thr50–Ser57 are cytoplasmic. The helical transmembrane segment at Pro58–Pro79 threads the bilayer. The Extracellular portion of the chain corresponds to Lys80 to Gln100. Residues Cys97 and Cys189 are joined by a disulfide bond. A helical transmembrane segment spans residues Ile101–Phe120. Over Asp121 to Gln139 the chain is Cytoplasmic. Residues Arg140 to Ile158 form a helical membrane-spanning segment. The Extracellular portion of the chain corresponds to Gln159–Leu195. The chain crosses the membrane as a helical span at residues Gly196–Ile219. Residues Phe220–Lys235 are Cytoplasmic-facing. A helical membrane pass occupies residues Ala236–Tyr258. Residues Ile259–Lys269 lie on the Extracellular side of the membrane. Residues Phe270 to Phe289 form a helical membrane-spanning segment. Over Arg290–Phe312 the chain is Cytoplasmic.

It belongs to the G-protein coupled receptor 1 family.

It localises to the cell membrane. Functionally, odorant receptor. The polypeptide is Olfactory receptor 4F6 (OR4F6) (Homo sapiens (Human)).